The chain runs to 107 residues: Thioredoxin 1 (107 aa).

A Thioredoxin domain is found at 2 to 107 (SVAAAVTDAT…TLANTLDKHL (106 aa)). A disulfide bridge links Cys32 with Cys35.

This sequence belongs to the thioredoxin family.

Its function is as follows. Participates in various redox reactions through the reversible oxidation of its active center dithiol to a disulfide and catalyzes dithiol-disulfide exchange reactions. In Synechococcus elongatus (strain ATCC 33912 / PCC 7942 / FACHB-805) (Anacystis nidulans R2), this protein is Thioredoxin 1 (trxA).